The chain runs to 213 residues: Histone H1.2 (213 aa).

Over residues 1–17 the composition is skewed to low complexity; sequence MSETAPAAPAAAPPAEK. Residues 1 to 41 form a disordered region; the sequence is MSETAPAAPAAAPPAEKTPVKKKAAKKPAGARRKASGPPVS. N-acetylserine; partial is present on Ser-2. Ser-2 carries the phosphoserine modification. Lys-17 is subject to N6-acetyllysine. A compositionally biased stretch (basic residues) spans 20–35; that stretch reads VKKKAAKKPAGARRKA. 3 positions are modified to N6-(2-hydroxyisobutyryl)lysine: Lys-23, Lys-26, and Lys-27. An N6-(beta-hydroxybutyryl)lysine; alternate modification is found at Lys-34. Position 34 is an N6-crotonyllysine; alternate (Lys-34). At Lys-34 the chain carries N6-methyllysine; alternate. Residues 36–109 form the H15 domain; that stretch reads SGPPVSELIT…GASGSFKLNK (74 aa). Lys-46 is modified (N6-(2-hydroxyisobutyryl)lysine). Lys-52 is subject to N6-(beta-hydroxybutyryl)lysine; alternate. The residue at position 52 (Lys-52) is an N6-(2-hydroxyisobutyryl)lysine; alternate. Arg-54 carries the post-translational modification Citrulline. At Lys-63 the chain carries N6-(2-hydroxyisobutyryl)lysine. N6-(beta-hydroxybutyryl)lysine; alternate is present on Lys-64. At Lys-64 the chain carries N6-crotonyllysine; alternate. The residue at position 64 (Lys-64) is an N6-(2-hydroxyisobutyryl)lysine; alternate. 2 positions are modified to N6-(2-hydroxyisobutyryl)lysine: Lys-75 and Lys-81. 2 positions are modified to N6-(beta-hydroxybutyryl)lysine; alternate: Lys-85 and Lys-90. Residues Lys-85, Lys-90, and Lys-97 each carry the N6-crotonyllysine; alternate modification. N6-(2-hydroxyisobutyryl)lysine; alternate is present on residues Lys-85, Lys-90, and Lys-97. Positions 95–213 are disordered; it reads QTKGTGASGS…KPKKAAPKKK (119 aa). Position 97 is an N6-succinyllysine; alternate (Lys-97). Ser-104 is modified (phosphoserine; by PKC). The residue at position 106 (Lys-106) is an N6-(beta-hydroxybutyryl)lysine. An N6-(2-hydroxyisobutyryl)lysine mark is found at Lys-110, Lys-117, Lys-121, Lys-129, and Lys-136. The span at 119–140 shows a compositional bias: basic residues; the sequence is KAKKAGAAKPKKAAGAAKKTKK. Thr-146 is subject to Phosphothreonine. N6-(2-hydroxyisobutyryl)lysine is present on Lys-148. The segment covering 149-160 has biased composition (basic residues); that stretch reads KTAKKTPKKAKK. Lys-159 and Lys-168 each carry N6-crotonyllysine; alternate. Lys-159 and Lys-168 each carry N6-(2-hydroxyisobutyryl)lysine; alternate. The segment covering 169-186 has biased composition (basic residues); sequence KVAKSPKKAKAAKPKKAA. Lys-187 is subject to N6-methyllysine; by EHMT1 and EHMT2. An ADP-ribosylserine modification is found at Ser-188. The span at 193–213 shows a compositional bias: basic residues; that stretch reads VKPKAAKPKVAKPKKAAPKKK.

This sequence belongs to the histone H1/H5 family. H1 histones are progressively phosphorylated during the cell cycle, becoming maximally phosphorylated during late G2 phase and M phase, and being dephosphorylated sharply thereafter. Post-translationally, crotonylation (Kcr) is specifically present in male germ cells and marks testis-specific genes in post-meiotic cells, including X-linked genes that escape sex chromosome inactivation in haploid cells. Crotonylation marks active promoters and enhancers and confers resistance to transcriptional repressors. It is also associated with post-meiotically activated genes on autosomes. In terms of processing, ADP-ribosylated on Ser-188 in response to DNA damage. Citrullination at Arg-54 (H1R54ci) by PADI4 takes place within the DNA-binding site of H1 and results in its displacement from chromatin and global chromatin decondensation, thereby promoting pluripotency and stem cell maintenance.

It localises to the nucleus. The protein resides in the chromosome. Functionally, histone H1 protein binds to linker DNA between nucleosomes forming the macromolecular structure known as the chromatin fiber. Histones H1 are necessary for the condensation of nucleosome chains into higher-order structured fibers. Also acts as a regulator of individual gene transcription through chromatin remodeling, nucleosome spacing and DNA methylation. This is Histone H1.2 from Bos taurus (Bovine).